Reading from the N-terminus, the 496-residue chain is MKLRELLATVDSVENLPPVLADAEVKGIKTNSHACGAGDLFIGMPGTRVDGGEFWPSAIASGAIAAIVSPQAVEKNPPHDEAVVISSNNMTKACAAIAAAFYGYPGQKLKLVGVTGTNGKTTTTHLIEFFLTKAKLSTALMGTLYTRWPGFEQTATHTTPFAVELQQQLAQAVNAGCEFGVMEVSSHALAQGRVLGCPFEVGVFSNLTQDHLDYHSDMEDYFAAKALLFSPEYLKGRAIINADDTYGQRLIKALSPEKVWSYSVNDSSADLWMSDLSYEPNGVTGTIHTPEGNVSFRSPLVGQYNLENLLAAVGAVLHLGLNLQLIANAIPEFPGVPGRMERVQINPDQDISVIVDYAHTPDSLENLLKAARPFIPGRMICVFGCGGDRDRTKRPKMGKIVAELADLAFVTSDNPRTEDPDRILDDILAGIPDTVQPTVIGDRAIAIRTAILQAQPGDGVLLAGKGHEDYQILGTEKIHFDDREHARAALTEREKL.

Residue Ser-32 coordinates UDP-N-acetyl-alpha-D-muramoyl-L-alanyl-D-glutamate. Residue 116–122 (GTNGKTT) coordinates ATP. UDP-N-acetyl-alpha-D-muramoyl-L-alanyl-D-glutamate is bound by residues 158–159 (TT), Ser-185, Gln-191, and Arg-193. Lys-225 carries the post-translational modification N6-carboxylysine. Residues Arg-389, 413–416 (DNPR), Gly-464, and Glu-468 contribute to the meso-2,6-diaminopimelate site. Positions 413–416 (DNPR) match the Meso-diaminopimelate recognition motif motif.

This sequence belongs to the MurCDEF family. MurE subfamily. Mg(2+) is required as a cofactor. Post-translationally, carboxylation is probably crucial for Mg(2+) binding and, consequently, for the gamma-phosphate positioning of ATP.

Its subcellular location is the cytoplasm. It catalyses the reaction UDP-N-acetyl-alpha-D-muramoyl-L-alanyl-D-glutamate + meso-2,6-diaminopimelate + ATP = UDP-N-acetyl-alpha-D-muramoyl-L-alanyl-gamma-D-glutamyl-meso-2,6-diaminopimelate + ADP + phosphate + H(+). The protein operates within cell wall biogenesis; peptidoglycan biosynthesis. Functionally, catalyzes the addition of meso-diaminopimelic acid to the nucleotide precursor UDP-N-acetylmuramoyl-L-alanyl-D-glutamate (UMAG) in the biosynthesis of bacterial cell-wall peptidoglycan. The sequence is that of UDP-N-acetylmuramoyl-L-alanyl-D-glutamate--2,6-diaminopimelate ligase from Nostoc sp. (strain PCC 7120 / SAG 25.82 / UTEX 2576).